The primary structure comprises 440 residues: Beta-1,3-galactosyl-O-glycosyl-glycoprotein beta-1,6-N-acetylglucosaminyltransferase 3 (440 aa).

At 1 to 12 (MKMTGWKKKLCR) the chain is on the cytoplasmic side. A helical; Signal-anchor for type II membrane protein transmembrane segment spans residues 13 to 30 (GHHLWALGCYSLLAVVAL). The Lumenal portion of the chain corresponds to 31–440 (RLSLRLKCDV…RHKAIYGTEL (410 aa)). Intrachain disulfides connect Cys73–Cys230, Cys164–Cys384, Cys185–Cys212, and Cys393–Cys425. A glycan (N-linked (GlcNAc...) asparagine) is linked at Asn108.

It belongs to the glycosyltransferase 14 family. Post-translationally, N-glycosylated.

The protein resides in the golgi apparatus membrane. It catalyses the reaction a 3-O-[beta-D-galactosyl-(1-&gt;3)-N-acetyl-alpha-D-galactosaminyl]-L-seryl-[protein] + UDP-N-acetyl-alpha-D-glucosamine = 3-O-{beta-D-galactosyl-(1-&gt;3)-[N-acetyl-beta-D-glucosaminyl-(1-&gt;6)]-N-acetyl-alpha-D-galactosaminyl}-L-seryl-[protein] + UDP + H(+). The catalysed reaction is a 3-O-[beta-D-galactosyl-(1-&gt;3)-N-acetyl-alpha-D-galactosaminyl]-L-threonyl-[protein] + UDP-N-acetyl-alpha-D-glucosamine = a 3-O-{beta-D-galactosyl-(1-&gt;3)-[N-acetyl-beta-D-glucosaminyl-(1-&gt;6)]-N-acetyl-alpha-D-galactosaminyl}-L-threonyl-[protein] + UDP + H(+). It carries out the reaction a beta-D-Gal-(1-&gt;4)-beta-D-GlcNAc-(1-&gt;3)-beta-D-Gal-(1-&gt;4)-beta-D-GlcNAc derivative + UDP-N-acetyl-alpha-D-glucosamine = a beta-D-Gal-(1-&gt;4)-beta-D-GlcNAc-(1-&gt;3)-[beta-D-GlcNAc-(1-&gt;6)]-beta-D-Gal-(1-&gt;4)-N-acetyl-beta-D-glucosaminyl derivative + UDP + H(+). The enzyme catalyses 3-O-[N-acetyl-beta-D-glucosaminyl-(1-&gt;3)-N-acetyl-alpha-D-galactosaminyl]-L-seryl-[protein] + UDP-N-acetyl-alpha-D-glucosamine = 3-O-[N-acetyl-beta-D-glucosaminyl-(1-&gt;3)-[N-acetyl-beta-D-glucosaminyl-(1-&gt;6)]-N-acetyl-alpha-D-galactosaminyl]-L-seryl-[protein] + UDP + H(+). It catalyses the reaction a 3-O-[N-acetyl-beta-D-glucosaminyl-(1-&gt;3)-N-acetyl-alpha-D-galactosaminyl]-L-threonyl-[protein] + UDP-N-acetyl-alpha-D-glucosamine = 3-O-[N-acetyl-beta-D-glucosaminyl-(1-&gt;3)-[N-acetyl-beta-D-glucosaminyl-(1-&gt;6)]-N-acetyl-alpha-D-galactosaminyl]-L-threonyl-[protein] + UDP + H(+). Its pathway is protein modification; protein glycosylation. In terms of biological role, glycosyltransferase that can synthesize all known mucin beta 6 N-acetylglucosaminides. Mediates core 2 and core 4 O-glycan branching, 2 important steps in mucin-type biosynthesis. Also has I-branching enzyme activity by converting linear into branched poly-N-acetyllactosaminoglycans, leading to introduce the blood group I antigen during embryonic development. The sequence is that of Beta-1,3-galactosyl-O-glycosyl-glycoprotein beta-1,6-N-acetylglucosaminyltransferase 3 (GCNT3) from Bos mutus grunniens (Wild yak).